The primary structure comprises 150 residues: 6,7-dimethyl-8-ribityllumazine synthase (150 aa).

5-amino-6-(D-ribitylamino)uracil contacts are provided by residues Phe-11, 43–45, and 67–69; these read VYD and AVI. 72 to 73 contacts (2S)-2-hydroxy-3-oxobutyl phosphate; that stretch reads AT. His-75 serves as the catalytic Proton donor. Leu-100 contacts 5-amino-6-(D-ribitylamino)uracil. Arg-115 is a binding site for (2S)-2-hydroxy-3-oxobutyl phosphate.

Belongs to the DMRL synthase family.

It catalyses the reaction (2S)-2-hydroxy-3-oxobutyl phosphate + 5-amino-6-(D-ribitylamino)uracil = 6,7-dimethyl-8-(1-D-ribityl)lumazine + phosphate + 2 H2O + H(+). Its pathway is cofactor biosynthesis; riboflavin biosynthesis; riboflavin from 2-hydroxy-3-oxobutyl phosphate and 5-amino-6-(D-ribitylamino)uracil: step 1/2. Its function is as follows. Catalyzes the formation of 6,7-dimethyl-8-ribityllumazine by condensation of 5-amino-6-(D-ribitylamino)uracil with 3,4-dihydroxy-2-butanone 4-phosphate. This is the penultimate step in the biosynthesis of riboflavin. The sequence is that of 6,7-dimethyl-8-ribityllumazine synthase from Pyrobaculum neutrophilum (strain DSM 2338 / JCM 9278 / NBRC 100436 / V24Sta) (Thermoproteus neutrophilus).